The following is a 922-amino-acid chain: Translation initiation factor IF-2 (922 aa).

The interval 33 to 310 (KTASSTVQPP…SKRQKRNEYE (278 aa)) is disordered. Residues 75–87 (PAAKAAPKAAAKP) show a composition bias toward low complexity. Composition is skewed to pro residues over residues 88 to 98 (GPKPGPKPGPQ) and 140 to 150 (TPKPGAKPGPK). Composition is skewed to low complexity over residues 151–169 (PGGAKPGAKPGPKPGGRAP) and 202–211 (PGSRPGGAKK). 2 stretches are compositionally biased toward gly residues: residues 215–225 (KPGGAKQGGGR) and 248–292 (FGGG…GRPG). Positions 296 to 305 (RKGRKSKRQK) are enriched in basic residues. The region spanning 418-590 (QRPPVVTVMG…VLLTADASLD (173 aa)) is the tr-type G domain. The G1 stretch occupies residues 427 to 434 (GHVDHGKT). 427–434 (GHVDHGKT) is a GTP binding site. A G2 region spans residues 452–456 (GITQH). Positions 477-480 (DTPG) are G3. GTP-binding positions include 477-481 (DTPGH) and 531-534 (NKID). The G4 stretch occupies residues 531–534 (NKID). The tract at residues 567-569 (SAK) is G5.

It belongs to the TRAFAC class translation factor GTPase superfamily. Classic translation factor GTPase family. IF-2 subfamily.

It is found in the cytoplasm. Its function is as follows. One of the essential components for the initiation of protein synthesis. Protects formylmethionyl-tRNA from spontaneous hydrolysis and promotes its binding to the 30S ribosomal subunits. Also involved in the hydrolysis of GTP during the formation of the 70S ribosomal complex. This chain is Translation initiation factor IF-2, found in Corynebacterium jeikeium (strain K411).